A 161-amino-acid chain; its full sequence is TRAF-interacting protein with FHA domain-containing protein B (161 aa).

The FHA domain maps to 36–91 (LLLGRGQDAHLQLQLPRLSRRHLSLEPYLEKGSALLAFCLKALSRKGCVWVNGLTL).

As to quaternary structure, interacts with TIFA.

In terms of biological role, inhibits TIFA-mediated TRAF6 activation possibly by inducing a conformational change in TIFA. This Homo sapiens (Human) protein is TRAF-interacting protein with FHA domain-containing protein B.